The chain runs to 477 residues: Glycogen synthase (477 aa).

K15 provides a ligand contact to ADP-alpha-D-glucose.

The protein belongs to the glycosyltransferase 1 family. Bacterial/plant glycogen synthase subfamily.

It catalyses the reaction [(1-&gt;4)-alpha-D-glucosyl](n) + ADP-alpha-D-glucose = [(1-&gt;4)-alpha-D-glucosyl](n+1) + ADP + H(+). It functions in the pathway glycan biosynthesis; glycogen biosynthesis. In terms of biological role, synthesizes alpha-1,4-glucan chains using ADP-glucose. The chain is Glycogen synthase from Edwardsiella ictaluri (strain 93-146).